The chain runs to 279 residues: Tryptophan synthase alpha chain (279 aa).

Active-site proton acceptor residues include glutamate 63 and aspartate 74.

This sequence belongs to the TrpA family. In terms of assembly, tetramer of two alpha and two beta chains.

The enzyme catalyses (1S,2R)-1-C-(indol-3-yl)glycerol 3-phosphate + L-serine = D-glyceraldehyde 3-phosphate + L-tryptophan + H2O. It participates in amino-acid biosynthesis; L-tryptophan biosynthesis; L-tryptophan from chorismate: step 5/5. Its function is as follows. The alpha subunit is responsible for the aldol cleavage of indoleglycerol phosphate to indole and glyceraldehyde 3-phosphate. This chain is Tryptophan synthase alpha chain, found in Prochlorococcus marinus subsp. pastoris (strain CCMP1986 / NIES-2087 / MED4).